Reading from the N-terminus, the 156-residue chain is Ribosome maturation factor RimP (156 aa).

This sequence belongs to the RimP family.

The protein resides in the cytoplasm. Required for maturation of 30S ribosomal subunits. The protein is Ribosome maturation factor RimP of Bacillus thuringiensis (strain Al Hakam).